We begin with the raw amino-acid sequence, 1883 residues long: Transmembrane protein 131 (1883 aa).

An N-terminal signal peptide occupies residues 1 to 22 (MGKRAGGGATGATTAAVSTSAG). Residues 23-1117 (AGLEPAAARS…AEALPRPNWE (1095 aa)) lie on the Lumenal side of the membrane. The interval 109–283 (RFEPPMLDFH…ETKGVMRASF (175 aa)) is papD-L domain. N-linked (GlcNAc...) asparagine glycosylation occurs at Asn-300. Ser-803 carries the phosphoserine modification. The helical transmembrane segment at 1118-1138 (LALYIIISGIMSALFLLVIGT) threads the bilayer. At 1139 to 1883 (AYLEAQGIWE…WSNSHFPHEN (745 aa)) the chain is on the cytoplasmic side. Disordered regions lie at residues 1198 to 1580 (GAGG…DSLY), 1593 to 1656 (LKQR…KNGN), 1670 to 1712 (PGGN…PVSN), 1766 to 1789 (WESP…HTAT), and 1832 to 1858 (MGTE…TYNP). Low complexity predominate over residues 1237–1261 (AKNSSSTSSRTSAQAASSQSANKTS). Positions 1302-1316 (PQPPLPPPVPQPQEP) are enriched in pro residues. Phosphoserine is present on residues Ser-1322 and Ser-1342. Basic and acidic residues-rich tracts occupy residues 1330–1343 (SHPE…HSSE) and 1353–1364 (AMDKDFDHHDSP). Ser-1375 carries the post-translational modification Phosphoserine. Positions 1380–1394 (SKGKGKPLQRKVKPP) are enriched in basic residues. Over residues 1395 to 1417 (KKQEEKEKKGKGKPQEDELKDSL) the composition is skewed to basic and acidic residues. Low complexity predominate over residues 1423-1434 (SSTTTETSNPDT). Basic and acidic residues predominate over residues 1436–1458 (PLLKEDTEKQKGKQAMPEKHESE). Polar residues-rich tracts occupy residues 1510–1526 (AMTS…TKGT) and 1542–1553 (PNSQELGNTSSS). The segment covering 1602–1611 (PASPSPPAAP) has biased composition (pro residues). Residues 1619–1630 (SYSSIVNSSSSS) are compositionally biased toward low complexity. Polar residues predominate over residues 1678-1690 (VSSNKTGFSSSLG). Composition is skewed to low complexity over residues 1773-1784 (PSPSWPASSGSP) and 1837-1849 (SPAP…SSPA). Phosphoserine occurs at positions 1863 and 1871.

This sequence belongs to the TMEM131 family. In terms of assembly, interacts (via PapD-L domain) with COL1A2 (via C-terminus); the interaction is direct, may occur with other collagen proteins, and is involved in assembly and TRAPPIII ER-to-Golgi transport complex-dependent secretion of collagen. Interacts (via C-terminus) with TRAPPC8 (via C-terminus); the interaction is direct.

The protein resides in the membrane. In terms of biological role, collagen binding transmembrane protein involved in collagen secretion by recruiting the ER-to-Golgi transport complex TRAPPIII. May play a role in the immune response to viral infection. The polypeptide is Transmembrane protein 131 (Homo sapiens (Human)).